The sequence spans 364 residues: MAKQTPLYDEHVACGARMVDFHGWMMPLHYGSQIDEHHNVRQDAGMFDVSHMTIVDLHGPQVKDFLRYLLANDVAKLTEKGKALYTGMLNASGGVIDDLIVYYFDETFYRLVVNSATREKDLAWITEHAKDYVVDIQVRDDLALIAVQGPHAQEKVQRLLSESHRQIVAAMKPFYGVQLDDLFVATTGYTGEAGYEIAMPKEQAVDYWKKLLAVGVKPAGLGARDTLRLEAGMDLYGQEMDETINPLEANMGWTIAWLPEDRQFIGREALEKLRATGTDKLVGLVMREKGVLRAGSAVHFTDDLGELREGVITSGTFSPTLGFSIALARVPAGIKDSAIVLLRNREIPVEVVKPGFVRSGKALV.

Belongs to the GcvT family. As to quaternary structure, the glycine cleavage system is composed of four proteins: P, T, L and H.

It catalyses the reaction N(6)-[(R)-S(8)-aminomethyldihydrolipoyl]-L-lysyl-[protein] + (6S)-5,6,7,8-tetrahydrofolate = N(6)-[(R)-dihydrolipoyl]-L-lysyl-[protein] + (6R)-5,10-methylene-5,6,7,8-tetrahydrofolate + NH4(+). Functionally, the glycine cleavage system catalyzes the degradation of glycine. In Proteus mirabilis (strain HI4320), this protein is Aminomethyltransferase.